We begin with the raw amino-acid sequence, 233 residues long: Octanoyltransferase (233 aa).

Residues 34-214 (GQAPSTVLLL…EFSAREATLI (181 aa)) form the BPL/LPL catalytic domain. Residues 72–79 (RGGKLTWH), 144–146 (AIG), and 157–159 (GFS) each bind substrate. C175 functions as the Acyl-thioester intermediate in the catalytic mechanism.

This sequence belongs to the LipB family.

The protein localises to the cytoplasm. The catalysed reaction is octanoyl-[ACP] + L-lysyl-[protein] = N(6)-octanoyl-L-lysyl-[protein] + holo-[ACP] + H(+). It participates in protein modification; protein lipoylation via endogenous pathway; protein N(6)-(lipoyl)lysine from octanoyl-[acyl-carrier-protein]: step 1/2. Its function is as follows. Catalyzes the transfer of endogenously produced octanoic acid from octanoyl-acyl-carrier-protein onto the lipoyl domains of lipoate-dependent enzymes. Lipoyl-ACP can also act as a substrate although octanoyl-ACP is likely to be the physiological substrate. The polypeptide is Octanoyltransferase (Renibacterium salmoninarum (strain ATCC 33209 / DSM 20767 / JCM 11484 / NBRC 15589 / NCIMB 2235)).